Here is a 130-residue protein sequence, read N- to C-terminus: UPF0102 protein RPE_0358 (130 aa).

This sequence belongs to the UPF0102 family.

This Rhodopseudomonas palustris (strain BisA53) protein is UPF0102 protein RPE_0358.